The sequence spans 660 residues: Alpha-1,2-mannosyltransferase MNN21 (660 aa).

Over 1 to 17 (MFQQLTYRLRLFRRRHK) the chain is Cytoplasmic. A helical membrane pass occupies residues 18–38 (YIFINSIFLSVIIIFLIYSYW). Residues 39–660 (SNLPAEDNSA…FLESTQNITD (622 aa)) lie on the Extracellular side of the membrane. Residues 75–125 (PFEEKKPQVNPNNNQEVGVESGASEISQHKQQQQQQQHAKEPTTKTSSKSL) are disordered. A glycan (N-linked (GlcNAc...) asparagine) is linked at asparagine 657.

This sequence belongs to the MNN1/MNT family.

It is found in the golgi apparatus membrane. The protein operates within protein modification; protein glycosylation. Its function is as follows. Alpha-1,2-mannosyltransferase required for cell wall integrity. Responsible for addition of the first alpha-1,2-linked mannose to form the branches on the mannan backbone of oligosaccharides. Addition of alpha-1,2-mannose is required for stabilization of the alpha-1,6-mannose backbone and hence regulates mannan fibril length; and is important for both immune recognition and virulence. The polypeptide is Alpha-1,2-mannosyltransferase MNN21 (MNN21) (Candida albicans (strain SC5314 / ATCC MYA-2876) (Yeast)).